The sequence spans 524 residues: Probable pectinesterase/pectinesterase inhibitor 42 (524 aa).

The N-terminal stretch at 1 to 22 (MLVKVFSFFILMITMVVIGVSK) is a signal peptide. Positions 23-172 (EYCDDKHSCQ…ISKAKVALAL (150 aa)) are pectinesterase inhibitor 42. A pectinesterase 42 region spans residues 215-510 (DVVVAKDGTG…FTVAKLLDGE (296 aa)). Asn-265 and Asn-281 each carry an N-linked (GlcNAc...) asparagine glycan. Thr-290 serves as a coordination point for substrate. The Proton donor; for pectinesterase activity role is filled by Asp-343. Cys-357 and Cys-377 are joined by a disulfide. The Nucleophile; for pectinesterase activity role is filled by Asp-364. Asn-412 is a glycosylation site (N-linked (GlcNAc...) asparagine). The substrate site is built by Arg-430 and Trp-432.

In the N-terminal section; belongs to the PMEI family. It in the C-terminal section; belongs to the pectinesterase family. Expressed in siliques but not in flower buds.

The protein resides in the secreted. Its subcellular location is the cell wall. It catalyses the reaction [(1-&gt;4)-alpha-D-galacturonosyl methyl ester](n) + n H2O = [(1-&gt;4)-alpha-D-galacturonosyl](n) + n methanol + n H(+). It participates in glycan metabolism; pectin degradation; 2-dehydro-3-deoxy-D-gluconate from pectin: step 1/5. In terms of biological role, acts in the modification of cell walls via demethylesterification of cell wall pectin. This chain is Probable pectinesterase/pectinesterase inhibitor 42 (PME42), found in Arabidopsis thaliana (Mouse-ear cress).